The primary structure comprises 688 residues: Elongation factor G (688 aa).

In terms of domain architecture, tr-type G spans 8–282; it reads DKFRNFGIMA…GVVDYLPSPL (275 aa). Residues 17 to 24, 81 to 85, and 135 to 138 contribute to the GTP site; these read AHIDAGKT, DTPGH, and NKMD.

Belongs to the TRAFAC class translation factor GTPase superfamily. Classic translation factor GTPase family. EF-G/EF-2 subfamily.

It localises to the cytoplasm. Catalyzes the GTP-dependent ribosomal translocation step during translation elongation. During this step, the ribosome changes from the pre-translocational (PRE) to the post-translocational (POST) state as the newly formed A-site-bound peptidyl-tRNA and P-site-bound deacylated tRNA move to the P and E sites, respectively. Catalyzes the coordinated movement of the two tRNA molecules, the mRNA and conformational changes in the ribosome. The polypeptide is Elongation factor G (Clostridium beijerinckii (strain ATCC 51743 / NCIMB 8052) (Clostridium acetobutylicum)).